The chain runs to 412 residues: MNDLIINHIAELILPKSTDKPLKGKELDELNVVKNGTVVIKDGKIVYAGQHTDDYDATETIDASGKVVSPALVDAHTHLTFGGSREHEMSLKRQGKSYLEILEMGGGILSTVNATRETSEDDLFKKAEHDLLTMIKHGVLAVESKSGYGLDRENELKQLKVSNRLAEKYDLDMKHTFLGPHAVPKEASSNEAFLEEMIALLPEVKQYADFADIFCETGVFTIEQSQHYMQKAKEAGFKVKIHADEIDPLGGLELAIDEQAISADHLVASSDKGKEKLRNSDTVAVLLPATTFYLGKEDYADARGMLDNNGAIALATDYNPGSSVTNNLQLVMAIAALKLKLSPSEVWNAVTVNAAKAIDINAGTINTGDKANLVIWDAPNHEYIPYHFGINHAEKVIKDGKVIVDNTLSFKA.

Positions 76 and 78 each coordinate Fe(3+). Zn(2+) is bound by residues His-76 and His-78. 4-imidazolone-5-propanoate contacts are provided by Arg-85, Tyr-148, and His-181. Tyr-148 is a binding site for N-formimidoyl-L-glutamate. A Fe(3+)-binding site is contributed by His-242. His-242 contacts Zn(2+). A 4-imidazolone-5-propanoate-binding site is contributed by Glu-245. Residue Asp-317 coordinates Fe(3+). Residue Asp-317 participates in Zn(2+) binding. Residues Asn-319 and Gly-321 each coordinate N-formimidoyl-L-glutamate. Ser-322 serves as a coordination point for 4-imidazolone-5-propanoate.

The protein belongs to the metallo-dependent hydrolases superfamily. HutI family. The cofactor is Zn(2+). Fe(3+) is required as a cofactor.

The protein resides in the cytoplasm. It carries out the reaction 4-imidazolone-5-propanoate + H2O = N-formimidoyl-L-glutamate. It functions in the pathway amino-acid degradation; L-histidine degradation into L-glutamate; N-formimidoyl-L-glutamate from L-histidine: step 3/3. In terms of biological role, catalyzes the hydrolytic cleavage of the carbon-nitrogen bond in imidazolone-5-propanoate to yield N-formimidoyl-L-glutamate. It is the third step in the universal histidine degradation pathway. This chain is Imidazolonepropionase, found in Staphylococcus aureus (strain Mu50 / ATCC 700699).